Consider the following 283-residue polypeptide: Transmembrane protein 45B (283 aa).

Helical transmembrane passes span 7 to 27 (HALP…KCPF), 55 to 75 (LIEG…EQFV), 99 to 119 (MYLF…SHHV), 121 to 141 (VGLD…LFYF), 153 to 173 (IHSL…MEVF), 187 to 207 (LAIL…PLSG), and 218 to 238 (IMFI…IVGI). Residues 261–283 (GLRKSTSTDSSSQKALLQESDEE) are disordered. A compositionally biased stretch (polar residues) spans 264-275 (KSTSTDSSSQKA).

The protein belongs to the TMEM45 family.

The protein localises to the membrane. In Danio rerio (Zebrafish), this protein is Transmembrane protein 45B (tmem45b).